Here is a 348-residue protein sequence, read N- to C-terminus: Phosphoribosylformylglycinamidine cyclo-ligase (348 aa).

This sequence belongs to the AIR synthase family.

It localises to the cytoplasm. The enzyme catalyses 2-formamido-N(1)-(5-O-phospho-beta-D-ribosyl)acetamidine + ATP = 5-amino-1-(5-phospho-beta-D-ribosyl)imidazole + ADP + phosphate + H(+). It participates in purine metabolism; IMP biosynthesis via de novo pathway; 5-amino-1-(5-phospho-D-ribosyl)imidazole from N(2)-formyl-N(1)-(5-phospho-D-ribosyl)glycinamide: step 2/2. The sequence is that of Phosphoribosylformylglycinamidine cyclo-ligase from Geotalea daltonii (strain DSM 22248 / JCM 15807 / FRC-32) (Geobacter daltonii).